The primary structure comprises 658 residues: UvrABC system protein B (658 aa).

The Helicase ATP-binding domain occupies 25-416 (KSLKNNNHYQ…QKNVAEQIIR (392 aa)). 38–45 (GVTGSGKT) is an ATP binding site. The short motif at 91–114 (HFDYYQPESYIPRRDLFIEKDSSI) is the Beta-hairpin element. The Helicase C-terminal domain occupies 433–607 (QVQDLFDEIK…ELKLRDDEIK (175 aa)). Positions 623 to 658 (EKIIKELDKKMRERAKNLDFEEAMRLRDEIAQLRTL) constitute a UVR domain.

This sequence belongs to the UvrB family. Forms a heterotetramer with UvrA during the search for lesions. Interacts with UvrC in an incision complex.

Its subcellular location is the cytoplasm. In terms of biological role, the UvrABC repair system catalyzes the recognition and processing of DNA lesions. A damage recognition complex composed of 2 UvrA and 2 UvrB subunits scans DNA for abnormalities. Upon binding of the UvrA(2)B(2) complex to a putative damaged site, the DNA wraps around one UvrB monomer. DNA wrap is dependent on ATP binding by UvrB and probably causes local melting of the DNA helix, facilitating insertion of UvrB beta-hairpin between the DNA strands. Then UvrB probes one DNA strand for the presence of a lesion. If a lesion is found the UvrA subunits dissociate and the UvrB-DNA preincision complex is formed. This complex is subsequently bound by UvrC and the second UvrB is released. If no lesion is found, the DNA wraps around the other UvrB subunit that will check the other stand for damage. This Helicobacter pylori (strain J99 / ATCC 700824) (Campylobacter pylori J99) protein is UvrABC system protein B.